Consider the following 535-residue polypeptide: Dual specificity mitogen-activated protein kinase kinase 7 (535 aa).

Ala2 is modified (N-acetylalanine). Residues Ala2–Leu30 are a coiled coil. The d domain stretch occupies residues Gln37 to Ser73. Residues Leu63–Leu93 are disordered. The span at Ser69–Gln79 shows a compositional bias: low complexity. Residues Leu136–Ile396 enclose the Protein kinase domain. ATP-binding positions include Met142 to Val150 and Lys165. Asp259 acts as the Proton acceptor in catalysis. Ser287 carries the post-translational modification Phosphoserine; by MAP3K. Residue Thr291 is modified to Phosphothreonine; by MAP3K. Residues His393–Lys416 form a DVD domain region. Ser427 carries the post-translational modification Phosphoserine.

This sequence belongs to the protein kinase superfamily. STE Ser/Thr protein kinase family. MAP kinase kinase subfamily. In terms of assembly, interacts with RASSF7, the interaction promotes phosphorylation. Interacts with VRK2. Interacts (via its D domain) with its substrates MAPK8/JNK1, MAPK9/JNK2 and MAPK10/JNK3. Interacts (via its DVD domain) with MAP3Ks activators like MAP3K5/ASK1 and MAP3K1/MEKK1. Interacts with SH3RF1, MAPK8IP1/JIP1, MAPK8IP2/JIP2 and MAPK8IP3/JIP3 scaffold proteins. Found in a complex with SH3RF1, RAC1, MAP3K11/MLK3, MAPK8IP1/JIP1 and MAPK8/JNK1. Found in a complex with SH3RF1, RAC2, MAP3K7/TAK1, MAPK8IP1/JIP1, MAPK8/JNK1 and MAPK9/JNK2. Mg(2+) serves as cofactor. In terms of processing, activated by phosphorylation on Ser-287 and Thr-291 by MAP kinase kinase kinases (MAP3Ks). Expressed at high levels in brain, lung, liver, skeletal muscle, kidney, and testis and at lower levels in the heart and spleen.

The protein localises to the nucleus. It is found in the cytoplasm. It carries out the reaction L-seryl-[protein] + ATP = O-phospho-L-seryl-[protein] + ADP + H(+). The enzyme catalyses L-threonyl-[protein] + ATP = O-phospho-L-threonyl-[protein] + ADP + H(+). It catalyses the reaction L-tyrosyl-[protein] + ATP = O-phospho-L-tyrosyl-[protein] + ADP + H(+). Activated by phosphorylation by specific MAP kinase kinase kinases such as MAP3K1/MEKK1, MAP3K3/MEKK3, MAP3K11/MLK3 and MAP3K12/DLK. Isoforms 3 and 4 have lower basal activity but a higher level of inducible activation, than isoforms 2, 6, 7 and 8. Its function is as follows. Dual specificity protein kinase which acts as an essential component of the MAP kinase signal transduction pathway. Essential component of the stress-activated protein kinase/c-Jun N-terminal kinase (SAP/JNK) signaling pathway. With MAP2K4/MKK4, is the one of the only known kinase to directly activate the stress-activated protein kinase/c-Jun N-terminal kinases MAPK8/JNK1, MAPK9/JNK2 and MAPK10/JNK3. MAP2K4/MKK4 and MAP2K7/MKK7 both activate the JNKs by phosphorylation, but they differ in their preference for the phosphorylation site in the Thr-Pro-Tyr motif. MAP2K4/MKK4 shows preference for phosphorylation of the Tyr residue and MAP2K7/MKK7 for the Thr residue. The monophosphorylation of JNKs on the Thr residue is sufficient to increase JNK activity indicating that MAP2K7/MKK7 is important to trigger JNK activity, while the additional phosphorylation of the Tyr residue by MAP2K4/MKK4 ensures optimal JNK activation. Has a specific role in JNK signal transduction pathway activated by pro-inflammatory cytokines. The MKK/JNK signaling pathway is also involved in mitochondrial death signaling pathway, including the release cytochrome c, leading to apoptosis. Part of a non-canonical MAPK signaling pathway, composed of the upstream MAP3K12 kinase and downstream MAP kinases MAPK1/ERK2 and MAPK3/ERK1, that enhances the AP-1-mediated transcription of APP in response to APOE. The protein is Dual specificity mitogen-activated protein kinase kinase 7 of Mus musculus (Mouse).